The following is a 354-amino-acid chain: Chorismate synthase (354 aa).

An NADP(+)-binding site is contributed by arginine 46. Residues 123–125 (RVS), 233–234 (NG), glycine 273, 288–292 (KPTPS), and arginine 314 each bind FMN.

This sequence belongs to the chorismate synthase family. Homotetramer. FMNH2 is required as a cofactor.

The catalysed reaction is 5-O-(1-carboxyvinyl)-3-phosphoshikimate = chorismate + phosphate. Its pathway is metabolic intermediate biosynthesis; chorismate biosynthesis; chorismate from D-erythrose 4-phosphate and phosphoenolpyruvate: step 7/7. Its function is as follows. Catalyzes the anti-1,4-elimination of the C-3 phosphate and the C-6 proR hydrogen from 5-enolpyruvylshikimate-3-phosphate (EPSP) to yield chorismate, which is the branch point compound that serves as the starting substrate for the three terminal pathways of aromatic amino acid biosynthesis. This reaction introduces a second double bond into the aromatic ring system. This Campylobacter curvus (strain 525.92) protein is Chorismate synthase.